The following is a 76-amino-acid chain: UPF0346 protein lhv_1069 (76 aa).

It belongs to the UPF0346 family.

The protein is UPF0346 protein lhv_1069 of Lactobacillus helveticus (strain DPC 4571).